The primary structure comprises 184 residues: Photosystem I assembly protein Ycf4 (184 aa).

A run of 2 helical transmembrane segments spans residues 22 to 42 (FCWA…GISS) and 57 to 77 (IVFF…LFIS).

The protein belongs to the Ycf4 family.

The protein localises to the plastid. It is found in the chloroplast thylakoid membrane. In terms of biological role, seems to be required for the assembly of the photosystem I complex. This chain is Photosystem I assembly protein Ycf4, found in Coffea arabica (Arabian coffee).